We begin with the raw amino-acid sequence, 665 residues long: MGPSGLLVALALHLAVCSRPHRDYCVLGAGPAGLQMAAFLHRAGRDYEVFERESAPGSFFTRYPRHRKLISINKRHTGKANAEFNLRHDWNSLLSDDPHLLFRHYSQAYFPDASDMVRYLGDFARRLGLHVLYNTNITHVTLDKDPQAWNGHYFILTDQKGQVYQCSVLLVATGLAVPKLVDFPGSEYVEGYESVSVDPEDFVGQNVLILGHGNSAFETAENILGVTNFVHMLSRSRVRLSWATHYVGDVRAINNGLLDTYQLKSLDGLLESDLEYLALVKDSKGKFHVTLKFLLENNSSQSADSIPLPEDDNDNFAMRVAYDRVIRCLGWTFDFSIFDQSLRLSSGTEFSKKYPLIKASYESKGSRGLFILGTASHSVDYRKSAGGFIHGFRYTVRAVHRLLEHRHHGIPWPSTEYPITQLTSSIIRRVNEASGLYQMFSVLADIILLKENATAFEYLEEFPMQMLAQLEMLTGRTARHGLFVINMEYGKNFSGPEKDVFYYDRSVAHIEDAWMSNFLHPVIYYYRHLPTEQDMRFRPAQWPLPRPTAIHHIVEDFLTDWTAPVGHILPLRRFLENCLDTDLRSFYAESCFLFTLTRQRLPPFCQQGYLRMQGLSSTKSLWQHGVESRLLQDYTAMENSNRWLGDHSTAPEPLTQSLDSNKEEL.

Positions 1-17 (MGPSGLLVALALHLAVC) are cleaved as a signal peptide. N-linked (GlcNAc...) asparagine glycosylation is present at asparagine 136. The disordered stretch occupies residues 642–665 (RWLGDHSTAPEPLTQSLDSNKEEL). A Prevents secretion from ER motif is present at residues 662–665 (KEEL).

Belongs to the FOXRED2 family. As to quaternary structure, interacts with SEL1L. May interact with OS9 and DNAJC10. Interacts with TXNDC16. FAD is required as a cofactor. Post-translationally, N-glycosylated.

It localises to the endoplasmic reticulum lumen. Its function is as follows. Probable flavoprotein which may function in endoplasmic reticulum associated degradation (ERAD). May bind non-native proteins in the endoplasmic reticulum and target them to the ubiquitination machinery for subsequent degradation. The sequence is that of FAD-dependent oxidoreductase domain-containing protein 2 from Mus musculus (Mouse).